The primary structure comprises 375 residues: Dihydroorotate dehydrogenase (quinone) (375 aa).

FMN-binding positions include 78–82 (AGLDK) and Thr-102. Residue Lys-82 coordinates substrate. Substrate is bound at residue 127-131 (NRMGF). FMN is bound by residues Asn-159 and Asn-192. Residue Asn-192 participates in substrate binding. Residue Ser-195 is the Nucleophile of the active site. Residue Asn-197 participates in substrate binding. 2 residues coordinate FMN: Lys-230 and Thr-258. A substrate-binding site is contributed by 259–260 (NT). FMN is bound by residues Gly-288, Gly-317, and 338 to 339 (YT).

It belongs to the dihydroorotate dehydrogenase family. Type 2 subfamily. In terms of assembly, monomer. The cofactor is FMN.

The protein resides in the cell membrane. It catalyses the reaction (S)-dihydroorotate + a quinone = orotate + a quinol. Its pathway is pyrimidine metabolism; UMP biosynthesis via de novo pathway; orotate from (S)-dihydroorotate (quinone route): step 1/1. Catalyzes the conversion of dihydroorotate to orotate with quinone as electron acceptor. The sequence is that of Dihydroorotate dehydrogenase (quinone) from Cyanothece sp. (strain PCC 7425 / ATCC 29141).